Here is a 1358-residue protein sequence, read N- to C-terminus: DNA-directed RNA polymerase subunit beta (1358 aa).

Belongs to the RNA polymerase beta chain family. The RNAP catalytic core consists of 2 alpha, 1 beta, 1 beta' and 1 omega subunit. When a sigma factor is associated with the core the holoenzyme is formed, which can initiate transcription.

The catalysed reaction is RNA(n) + a ribonucleoside 5'-triphosphate = RNA(n+1) + diphosphate. DNA-dependent RNA polymerase catalyzes the transcription of DNA into RNA using the four ribonucleoside triphosphates as substrates. In Chromohalobacter salexigens (strain ATCC BAA-138 / DSM 3043 / CIP 106854 / NCIMB 13768 / 1H11), this protein is DNA-directed RNA polymerase subunit beta.